A 408-amino-acid chain; its full sequence is S-adenosylmethionine synthase (408 aa).

His-16 is an ATP binding site. Asp-18 is a Mg(2+) binding site. K(+) is bound at residue Glu-44. Glu-57 and Gln-100 together coordinate L-methionine. Residues Gln-100–Arg-110 form a flexible loop region. Residues Asp-177–Lys-179, Asp-257, Arg-263–Lys-264, Ala-280, and Lys-284 each bind ATP. Asp-257 is a binding site for L-methionine. Residue Lys-288 coordinates L-methionine.

The protein belongs to the AdoMet synthase family. Homotetramer; dimer of dimers. Mg(2+) serves as cofactor. It depends on K(+) as a cofactor.

The protein localises to the cytoplasm. It carries out the reaction L-methionine + ATP + H2O = S-adenosyl-L-methionine + phosphate + diphosphate. Its pathway is amino-acid biosynthesis; S-adenosyl-L-methionine biosynthesis; S-adenosyl-L-methionine from L-methionine: step 1/1. Its function is as follows. Catalyzes the formation of S-adenosylmethionine (AdoMet) from methionine and ATP. The overall synthetic reaction is composed of two sequential steps, AdoMet formation and the subsequent tripolyphosphate hydrolysis which occurs prior to release of AdoMet from the enzyme. The polypeptide is S-adenosylmethionine synthase (Bifidobacterium animalis subsp. lactis (strain AD011)).